The sequence spans 124 residues: Ribonuclease P protein component 2 (124 aa).

It belongs to the eukaryotic/archaeal RNase P protein component 2 family. As to quaternary structure, consists of a catalytic RNA component and at least 4-5 protein subunits.

Its subcellular location is the cytoplasm. The catalysed reaction is Endonucleolytic cleavage of RNA, removing 5'-extranucleotides from tRNA precursor.. Part of ribonuclease P, a protein complex that generates mature tRNA molecules by cleaving their 5'-ends. This is Ribonuclease P protein component 2 from Methanothermobacter thermautotrophicus (strain ATCC 29096 / DSM 1053 / JCM 10044 / NBRC 100330 / Delta H) (Methanobacterium thermoautotrophicum).